The chain runs to 62 residues: Small ribosomal subunit protein bS21 (62 aa).

The segment at 38 to 62 (YEKPSERRKRKMNAAVRKNRRTRHG) is disordered.

The protein belongs to the bacterial ribosomal protein bS21 family.

In Gemmatimonas aurantiaca (strain DSM 14586 / JCM 11422 / NBRC 100505 / T-27), this protein is Small ribosomal subunit protein bS21.